A 352-amino-acid polypeptide reads, in one-letter code: Chorismate synthase (352 aa).

Arginine 48 is a binding site for NADP(+). Residues 125 to 127, 238 to 239, glycine 278, 293 to 297, and arginine 319 each bind FMN; these read RSS, NA, and KPTSS.

This sequence belongs to the chorismate synthase family. Homotetramer. Requires FMNH2 as cofactor.

The enzyme catalyses 5-O-(1-carboxyvinyl)-3-phosphoshikimate = chorismate + phosphate. It functions in the pathway metabolic intermediate biosynthesis; chorismate biosynthesis; chorismate from D-erythrose 4-phosphate and phosphoenolpyruvate: step 7/7. Functionally, catalyzes the anti-1,4-elimination of the C-3 phosphate and the C-6 proR hydrogen from 5-enolpyruvylshikimate-3-phosphate (EPSP) to yield chorismate, which is the branch point compound that serves as the starting substrate for the three terminal pathways of aromatic amino acid biosynthesis. This reaction introduces a second double bond into the aromatic ring system. The chain is Chorismate synthase from Legionella pneumophila subsp. pneumophila (strain Philadelphia 1 / ATCC 33152 / DSM 7513).